Consider the following 777-residue polypeptide: Aconitate hydratase, mitochondrial (777 aa).

Residues glutamine 96 and 189 to 191 (DSH) each bind substrate. Cysteine 383, cysteine 446, and cysteine 449 together coordinate [4Fe-4S] cluster. Substrate is bound by residues arginine 472, arginine 477, arginine 605, and 668-669 (SR).

Belongs to the aconitase/IPM isomerase family. Monomer. The cofactor is [4Fe-4S] cluster.

The protein resides in the mitochondrion. It catalyses the reaction citrate = D-threo-isocitrate. Its pathway is carbohydrate metabolism; tricarboxylic acid cycle; isocitrate from oxaloacetate: step 2/2. Functionally, catalyzes the isomerization of citrate to isocitrate via cis-aconitate, a step in the citric acid cycle. In Candida albicans (strain SC5314 / ATCC MYA-2876) (Yeast), this protein is Aconitate hydratase, mitochondrial (ACO1).